A 185-amino-acid polypeptide reads, in one-letter code: Large ribosomal subunit protein uL5 (185 aa).

It belongs to the universal ribosomal protein uL5 family. In terms of assembly, part of the 50S ribosomal subunit; part of the 5S rRNA/L5/L18/L25 subcomplex. Contacts the 5S rRNA and the P site tRNA. Forms a bridge to the 30S subunit in the 70S ribosome.

In terms of biological role, this is one of the proteins that bind and probably mediate the attachment of the 5S RNA into the large ribosomal subunit, where it forms part of the central protuberance. In the 70S ribosome it contacts protein S13 of the 30S subunit (bridge B1b), connecting the 2 subunits; this bridge is implicated in subunit movement. Contacts the P site tRNA; the 5S rRNA and some of its associated proteins might help stabilize positioning of ribosome-bound tRNAs. The protein is Large ribosomal subunit protein uL5 of Bacteroides fragilis (strain ATCC 25285 / DSM 2151 / CCUG 4856 / JCM 11019 / LMG 10263 / NCTC 9343 / Onslow / VPI 2553 / EN-2).